The following is a 389-amino-acid chain: Chalcone synthase E (389 aa).

The active site involves Cys-164.

The protein belongs to the thiolase-like superfamily. Chalcone/stilbene synthases family.

It catalyses the reaction (E)-4-coumaroyl-CoA + 3 malonyl-CoA + 3 H(+) = 2',4,4',6'-tetrahydroxychalcone + 3 CO2 + 4 CoA. Its pathway is secondary metabolite biosynthesis; flavonoid biosynthesis. Functionally, the primary product of this enzyme is 4,2',4',6'-tetrahydroxychalcone (also termed naringenin-chalcone or chalcone) which can under specific conditions spontaneously isomerize into naringenin. In Ipomoea nil (Japanese morning glory), this protein is Chalcone synthase E (CHSE).